A 280-amino-acid polypeptide reads, in one-letter code: Ribosomal RNA small subunit methyltransferase A (280 aa).

S-adenosyl-L-methionine-binding residues include Asn30, Val32, Gly57, Glu78, Asp108, and Asn125.

Belongs to the class I-like SAM-binding methyltransferase superfamily. rRNA adenine N(6)-methyltransferase family. RsmA subfamily.

It is found in the cytoplasm. It catalyses the reaction adenosine(1518)/adenosine(1519) in 16S rRNA + 4 S-adenosyl-L-methionine = N(6)-dimethyladenosine(1518)/N(6)-dimethyladenosine(1519) in 16S rRNA + 4 S-adenosyl-L-homocysteine + 4 H(+). Specifically dimethylates two adjacent adenosines (A1518 and A1519) in the loop of a conserved hairpin near the 3'-end of 16S rRNA in the 30S particle. May play a critical role in biogenesis of 30S subunits. The sequence is that of Ribosomal RNA small subunit methyltransferase A from Leifsonia xyli subsp. xyli (strain CTCB07).